The sequence spans 257 residues: Triosephosphate isomerase (257 aa).

9–11 (NWK) contributes to the substrate binding site. Histidine 97 serves as the catalytic Electrophile. Glutamate 169 functions as the Proton acceptor in the catalytic mechanism. Substrate-binding positions include glycine 175, serine 214, and 235–236 (GG).

Belongs to the triosephosphate isomerase family. As to quaternary structure, homodimer.

The protein localises to the cytoplasm. The catalysed reaction is D-glyceraldehyde 3-phosphate = dihydroxyacetone phosphate. It functions in the pathway carbohydrate biosynthesis; gluconeogenesis. Its pathway is carbohydrate degradation; glycolysis; D-glyceraldehyde 3-phosphate from glycerone phosphate: step 1/1. Involved in the gluconeogenesis. Catalyzes stereospecifically the conversion of dihydroxyacetone phosphate (DHAP) to D-glyceraldehyde-3-phosphate (G3P). The chain is Triosephosphate isomerase from Vibrio cholerae serotype O1 (strain ATCC 39315 / El Tor Inaba N16961).